The following is a 198-amino-acid chain: Holliday junction branch migration complex subunit RuvA (198 aa).

The tract at residues 1-63 (MYDYIKGQLT…EDAHLLFGFH (63 aa)) is domain I. Residues 64–142 (TEDEKDVFLK…EAPQETGNTK (79 aa)) form a domain II region. The segment at 143–147 (ARSNK) is flexible linker. The domain III stretch occupies residues 148–198 (AGNTQLDEAIEALLALGYKATELKKIRAFFEGTSETAEQYIKSALKLLMKG).

This sequence belongs to the RuvA family. In terms of assembly, homotetramer. Forms an RuvA(8)-RuvB(12)-Holliday junction (HJ) complex. HJ DNA is sandwiched between 2 RuvA tetramers; dsDNA enters through RuvA and exits via RuvB. An RuvB hexamer assembles on each DNA strand where it exits the tetramer. Each RuvB hexamer is contacted by two RuvA subunits (via domain III) on 2 adjacent RuvB subunits; this complex drives branch migration. In the full resolvosome a probable DNA-RuvA(4)-RuvB(12)-RuvC(2) complex forms which resolves the HJ.

It is found in the cytoplasm. Its function is as follows. The RuvA-RuvB-RuvC complex processes Holliday junction (HJ) DNA during genetic recombination and DNA repair, while the RuvA-RuvB complex plays an important role in the rescue of blocked DNA replication forks via replication fork reversal (RFR). RuvA specifically binds to HJ cruciform DNA, conferring on it an open structure. The RuvB hexamer acts as an ATP-dependent pump, pulling dsDNA into and through the RuvAB complex. HJ branch migration allows RuvC to scan DNA until it finds its consensus sequence, where it cleaves and resolves the cruciform DNA. The sequence is that of Holliday junction branch migration complex subunit RuvA from Streptococcus pyogenes serotype M12 (strain MGAS2096).